The sequence spans 139 residues: Transcription antitermination protein NusB (139 aa).

Belongs to the NusB family.

Functionally, involved in transcription antitermination. Required for transcription of ribosomal RNA (rRNA) genes. Binds specifically to the boxA antiterminator sequence of the ribosomal RNA (rrn) operons. The polypeptide is Transcription antitermination protein NusB (Escherichia coli (strain K12 / MC4100 / BW2952)).